Here is a 474-residue protein sequence, read N- to C-terminus: Vasculin-like protein 1 (474 aa).

Residues Gln17–Val42 are disordered. The segment covering Phe26–Gly38 has biased composition (basic and acidic residues). Ser49 and Ser76 each carry phosphoserine. The tract at residues Gly91 to Gln191 is disordered. Positions Asn116–Lys128 are enriched in basic residues. A compositionally biased stretch (basic and acidic residues) spans Pro136–Phe154. Ser202 is subject to Phosphoserine. The segment at Leu238 to Ala371 is disordered. Residues Gly262–Ser277 show a composition bias toward polar residues. Positions Ser291–Thr312 are enriched in low complexity. Ser292 bears the Phosphoserine mark. Thr301 is subject to Phosphothreonine. Basic and acidic residues-rich tracts occupy residues Arg317–Leu346 and Glu356–Cys365. Residue Ser382 is modified to Phosphoserine. Residues Ala453–Lys474 form a disordered region.

This sequence belongs to the vasculin family.

It localises to the nucleus. Functionally, possible transcription factor. The chain is Vasculin-like protein 1 (GPBP1L1) from Homo sapiens (Human).